Reading from the N-terminus, the 82-residue chain is Cytochrome c-551 (82 aa).

Cys-12, Cys-15, His-16, and Met-61 together coordinate heme c.

Post-translationally, binds 1 heme c group covalently per subunit.

Functionally, this is a prokaryotic monoheme cytochrome, unreactive with mitochondrial cytochrome C oxidase or reductase. It functions in nitrite and nitrate respiration in Pseudomonas, but it is also found in other bacteria. The sequence is that of Cytochrome c-551 from Pseudomonas denitrificans.